Consider the following 116-residue polypeptide: Small ribosomal subunit protein bS16 (116 aa).

The protein belongs to the bacterial ribosomal protein bS16 family.

This chain is Small ribosomal subunit protein bS16, found in Chlamydia trachomatis serovar L2 (strain ATCC VR-902B / DSM 19102 / 434/Bu).